A 96-amino-acid chain; its full sequence is Putative membrane protein insertion efficiency factor (96 aa).

A disordered region spans residues 68-96 (DPVPEHFPARHPRPQGSPPTDHPPTDQPS). Pro residues predominate over residues 82 to 96 (QGSPPTDHPPTDQPS).

The protein belongs to the UPF0161 family.

The protein resides in the cell membrane. Could be involved in insertion of integral membrane proteins into the membrane. The protein is Putative membrane protein insertion efficiency factor of Deinococcus radiodurans (strain ATCC 13939 / DSM 20539 / JCM 16871 / CCUG 27074 / LMG 4051 / NBRC 15346 / NCIMB 9279 / VKM B-1422 / R1).